The chain runs to 378 residues: Queuine tRNA-ribosyltransferase (378 aa).

Asp93 functions as the Proton acceptor in the catalytic mechanism. Substrate-binding positions include 93–97 (DSGGF), Asp147, Gln189, and Gly216. Residues 247 to 253 (GVGTFRE) are RNA binding. Residue Asp266 is the Nucleophile of the active site. Residues 271 to 275 (TRVAR) form an RNA binding; important for wobble base 34 recognition region. Cys308, Cys310, Cys313, and His339 together coordinate Zn(2+).

It belongs to the queuine tRNA-ribosyltransferase family. Homodimer. Within each dimer, one monomer is responsible for RNA recognition and catalysis, while the other monomer binds to the replacement base PreQ1. Zn(2+) serves as cofactor.

It catalyses the reaction 7-aminomethyl-7-carbaguanine + guanosine(34) in tRNA = 7-aminomethyl-7-carbaguanosine(34) in tRNA + guanine. The protein operates within tRNA modification; tRNA-queuosine biosynthesis. Its function is as follows. Catalyzes the base-exchange of a guanine (G) residue with the queuine precursor 7-aminomethyl-7-deazaguanine (PreQ1) at position 34 (anticodon wobble position) in tRNAs with GU(N) anticodons (tRNA-Asp, -Asn, -His and -Tyr). Catalysis occurs through a double-displacement mechanism. The nucleophile active site attacks the C1' of nucleotide 34 to detach the guanine base from the RNA, forming a covalent enzyme-RNA intermediate. The proton acceptor active site deprotonates the incoming PreQ1, allowing a nucleophilic attack on the C1' of the ribose to form the product. After dissociation, two additional enzymatic reactions on the tRNA convert PreQ1 to queuine (Q), resulting in the hypermodified nucleoside queuosine (7-(((4,5-cis-dihydroxy-2-cyclopenten-1-yl)amino)methyl)-7-deazaguanosine). The polypeptide is Queuine tRNA-ribosyltransferase (Gloeobacter violaceus (strain ATCC 29082 / PCC 7421)).